The sequence spans 884 residues: Schlafen family member 5 (884 aa).

Residue 574–581 (GLPGSGKT) participates in ATP binding.

The protein belongs to the Schlafen family. Subgroup III subfamily.

Functionally, may have a role in hematopoietic cell differentiation. This is Schlafen family member 5 (Slfn5) from Mus musculus (Mouse).